Here is a 331-residue protein sequence, read N- to C-terminus: Coiled-coil domain-containing protein 92 (331 aa).

2 coiled-coil regions span residues 18–44 (MAAT…HAST) and 76–152 (DGTS…EQRA). The span at 171–184 (SSSGTSDASPSGSP) shows a compositional bias: low complexity. Residues 171-212 (SSSGTSDASPSGSPVLASYKPAPPKDKLPETPRRRMKKSLSA) form a disordered region. Residues 193-203 (PPKDKLPETPR) are compositionally biased toward basic and acidic residues. Residue Ser209 is modified to Phosphoserine.

Interacts with CEP164. In terms of assembly, (Microbial infection) Interacts with ebolavirus protein NP; this interaction sequesters NP in the cytoplasm. Post-translationally, phosphorylated at Ser-209 by TTBK2.

The protein resides in the cytoplasm. The protein localises to the cytoskeleton. It is found in the microtubule organizing center. Its subcellular location is the centrosome. It localises to the centriole. Functionally, interferon-stimulated protein that plays a role in innate immunity. Strongly inhibits ebolavirus transcription and replication. Forms a complex with viral RNA-bound nucleocapsid NP and thereby prevents the transport of NP to the cell surface. The sequence is that of Coiled-coil domain-containing protein 92 (CCDC92) from Homo sapiens (Human).